Consider the following 808-residue polypeptide: Glutamate receptor 1.1 (808 aa).

The first 19 residues, 1 to 19, serve as a signal peptide directing secretion; it reads MEILFSISILALLFSGVVA. The Extracellular segment spans residues 20–541; it reads APSDDDVFEE…MWTFFDPFEK (522 aa). Residues Asn288, Asn339, and Asn504 are each glycosylated (N-linked (GlcNAc...) asparagine). A helical transmembrane segment spans residues 542 to 562; sequence SLWLASGAFFVLTGIVVWLVE. Residues 563 to 570 lie on the Cytoplasmic side of the membrane; sequence RSVNPEFQ. Residues 571–591 traverse the membrane as a helical segment; sequence GSWGQQLSMMLWFGFSTIVFA. Over 592–602 the chain is Cytoplasmic; the sequence is HREKLQKMSSR. Residues 603–623 form a helical membrane-spanning segment; it reads FLVIVWVFVVLILTSSYSANL. The Extracellular segment spans residues 624–771; it reads TSTKTISRMQ…SKRFTFRELR (148 aa). Residues 772-792 traverse the membrane as a helical segment; that stretch reads GLFIIAGAAHVLVLALHLFHT. The Cytoplasmic portion of the chain corresponds to 793–808; that stretch reads RQEVSRLCTKLQSFYK.

It belongs to the glutamate-gated ion channel (TC 1.A.10.1) family. In terms of assembly, may form heteromers. In terms of tissue distribution, expressed predominantly in roots. First detected in the root-shoot junction, and later in lateral roots and at the margin of matures leaves.

The protein resides in the membrane. Its function is as follows. Glutamate-gated receptor that probably acts as a non-selective cation channel. Can transport sodium, potassium, and calcium ions. Functions as a carbon and nitrogen regulator and/or sensor that regulates carbon and nitrogen metabolism and distinct physiological process such as germination through the control of acid abscisic (ABA) biosynthesis. May be involved in light-signal transduction and calcium homeostasis via the regulation of calcium influx into cells. Seems required for the regulation of the abscisic acid (ABA) signaling pathway that modulates many aspects of plant physiology such as seed germination and response to drought (e.g. stomata opening). The chain is Glutamate receptor 1.1 (GLR1.1) from Arabidopsis thaliana (Mouse-ear cress).